The primary structure comprises 86 residues: Exodeoxyribonuclease 7 small subunit (86 aa).

It belongs to the XseB family. In terms of assembly, heterooligomer composed of large and small subunits.

It is found in the cytoplasm. It catalyses the reaction Exonucleolytic cleavage in either 5'- to 3'- or 3'- to 5'-direction to yield nucleoside 5'-phosphates.. In terms of biological role, bidirectionally degrades single-stranded DNA into large acid-insoluble oligonucleotides, which are then degraded further into small acid-soluble oligonucleotides. This is Exodeoxyribonuclease 7 small subunit from Bacillus licheniformis (strain ATCC 14580 / DSM 13 / JCM 2505 / CCUG 7422 / NBRC 12200 / NCIMB 9375 / NCTC 10341 / NRRL NRS-1264 / Gibson 46).